Consider the following 334-residue polypeptide: Beta-glucanase (334 aa).

The first 27 residues, 1–27 (MKNRVISLLMASLLLVLSVIVAPFYKA), serve as a signal peptide directing secretion. Residues 28–248 (EAATVVNTPF…YVKYYPNGVP (221 aa)) form the GH16 domain. The active-site Nucleophile is the E136. E140 functions as the Proton donor in the catalytic mechanism. A Dockerin domain is found at 267–334 (NLPLKGDVNG…RYLIRAIPSL (68 aa)).

It belongs to the glycosyl hydrolase 16 family. In terms of assembly, may form part of a multienzyme complex (cellulosome).

The enzyme catalyses Hydrolysis of (1-&gt;4)-beta-D-glucosidic linkages in beta-D-glucans containing (1-&gt;3)- and (1-&gt;4)-bonds.. This chain is Beta-glucanase (licB), found in Acetivibrio thermocellus (strain ATCC 27405 / DSM 1237 / JCM 9322 / NBRC 103400 / NCIMB 10682 / NRRL B-4536 / VPI 7372) (Clostridium thermocellum).